The following is a 453-amino-acid chain: UDP-glycosyltransferase 79B3 (453 aa).

Residues serine 266, 325 to 327 (VQQ), 342 to 350 (HCGFGSMWE), and 364 to 367 (LGDQ) each bind UDP-alpha-D-glucose.

This sequence belongs to the UDP-glycosyltransferase family.

The polypeptide is UDP-glycosyltransferase 79B3 (UGT79B3) (Arabidopsis thaliana (Mouse-ear cress)).